The following is a 132-amino-acid chain: MALQIKIVAPNKVVFDDQVDEVVLPSVSGQLGILTNHAPLITGLSNGVMRVRKQGTFIPIAVLTGVAEVDNNEVSVVAMAAELGSGIDVDRARAALARAEQTLATSQNKTELLQAQTALERANARLRAAGAL.

The protein belongs to the ATPase epsilon chain family. As to quaternary structure, F-type ATPases have 2 components, CF(1) - the catalytic core - and CF(0) - the membrane proton channel. CF(1) has five subunits: alpha(3), beta(3), gamma(1), delta(1), epsilon(1). CF(0) has three main subunits: a, b and c.

The protein localises to the cell inner membrane. Its function is as follows. Produces ATP from ADP in the presence of a proton gradient across the membrane. The sequence is that of ATP synthase epsilon chain from Gloeobacter violaceus (strain ATCC 29082 / PCC 7421).